The primary structure comprises 428 residues: Divalent metal cation transporter MntH (428 aa).

A run of 11 helical transmembrane segments spans residues 33-53 (WYLL…GNVA), 60-80 (AQFG…AALV), 114-134 (QAEI…AIAL), 136-156 (IMFN…SLLL), 171-191 (VITA…FVVT), 210-230 (SVLL…VYLH), 258-278 (VGLA…VAAL), 299-319 (TLGA…GLAS), 334-356 (LLHW…LAIL), 365-385 (TLVL…LPLV), and 406-426 (VGWV…YLTV).

The protein belongs to the NRAMP family.

Its subcellular location is the cell membrane. In terms of biological role, h(+)-stimulated, divalent metal cation uptake system. Transports zinc and iron. Can also interact with manganese and copper. This is Divalent metal cation transporter MntH from Mycobacterium tuberculosis (strain CDC 1551 / Oshkosh).